A 75-amino-acid polypeptide reads, in one-letter code: CDC42 small effector protein 2-B (75 aa).

2 S-palmitoyl cysteine lipidation sites follow: cysteine 10 and cysteine 11. Residues 29–42 (IGEPMNFVHTAHVG) enclose the CRIB domain.

It belongs to the CDC42SE/SPEC family.

Its subcellular location is the cytoplasm. It is found in the cytoskeleton. The protein resides in the cell membrane. Probably involved in the organization of the actin cytoskeleton by acting downstream of CDC42, inducing actin filament assembly. This is CDC42 small effector protein 2-B (cdc42se2-b) from Xenopus laevis (African clawed frog).